A 464-amino-acid chain; its full sequence is Cysteine--tRNA ligase (464 aa).

Residue cysteine 29 participates in Zn(2+) binding. The 'HIGH' region signature appears at 31–41 (ATVQGDPHIGH). Zn(2+)-binding residues include cysteine 207, histidine 232, and glutamate 236. The short motif at 263–267 (KMSKS) is the 'KMSKS' region element. Lysine 266 provides a ligand contact to ATP.

The protein belongs to the class-I aminoacyl-tRNA synthetase family. As to quaternary structure, monomer. Zn(2+) is required as a cofactor.

The protein resides in the cytoplasm. The catalysed reaction is tRNA(Cys) + L-cysteine + ATP = L-cysteinyl-tRNA(Cys) + AMP + diphosphate. This chain is Cysteine--tRNA ligase, found in Rhodococcus opacus (strain B4).